The primary structure comprises 560 residues: Membrane protein insertase YidC (560 aa).

The next 6 helical transmembrane spans lie at 5–25 (IINL…WQYF), 334–354 (AIDF…MNFF), 357–377 (YVGN…LLMF), 431–451 (LPIL…YVTI), 476–496 (LFGL…WPIL), and 522–542 (FMPL…LIYW).

The protein belongs to the OXA1/ALB3/YidC family. Type 1 subfamily. In terms of assembly, interacts with the Sec translocase complex via SecD. Specifically interacts with transmembrane segments of nascent integral membrane proteins during membrane integration.

The protein localises to the cell inner membrane. Functionally, required for the insertion and/or proper folding and/or complex formation of integral membrane proteins into the membrane. Involved in integration of membrane proteins that insert both dependently and independently of the Sec translocase complex, as well as at least some lipoproteins. Aids folding of multispanning membrane proteins. The chain is Membrane protein insertase YidC from Rickettsia prowazekii (strain Madrid E).